A 79-amino-acid chain; its full sequence is Putative defensin-like protein 80 (79 aa).

Residues 1-26 (MDVQRSSYIFIALSIIAMFLITGVKP) form the signal peptide. 4 disulfides stabilise this stretch: Cys32/Cys65, Cys36/Cys58, Cys44/Cys63, and Cys48/Cys64.

This sequence belongs to the DEFL family.

It is found in the secreted. This is Putative defensin-like protein 80 (LCR81) from Arabidopsis thaliana (Mouse-ear cress).